The sequence spans 335 residues: Nucleoid-associated protein KPK_1538 (335 aa).

Belongs to the YejK family.

It is found in the cytoplasm. The protein resides in the nucleoid. The protein is Nucleoid-associated protein KPK_1538 of Klebsiella pneumoniae (strain 342).